Reading from the N-terminus, the 272-residue chain is Energy-coupling factor transporter ATP-binding protein EcfA1 (272 aa).

The ABC transporter domain occupies 5–239 (IKIDNLKYSY…RKALHENGLE (235 aa)). 37 to 44 (GHNGSGKS) contributes to the ATP binding site. Residue glutamate 163 is the Proton acceptor of the active site.

It belongs to the ABC transporter superfamily. Energy-coupling factor EcfA family. In terms of assembly, forms a stable energy-coupling factor (ECF) transporter complex probably composed of 2 membrane-embedded substrate-binding proteins (S component), 2 ATP-binding proteins (A component) and 2 transmembrane proteins (T component). This complex interacts with a number of substrate-specific components, including FolT, PanT and RibU for 5-formyltetrahydrofolate, pantothenate and riboflavin respectively.

The protein localises to the cell membrane. ATP-binding (A) component of a common energy-coupling factor (ECF) ABC-transporter complex. Unlike classic ABC transporters this ECF transporter provides the energy necessary to transport a number of different substrates including 5-formyltetrahydrofolate, pantothenate and riboflavin. Expression of the complex plus FolT in E.coli allows 5-formyltetrahydrofolate uptake; 5-formyltetrahydrofolate is not taken up in the absence of FolT or the EcfA1A2T complex. In Leuconostoc mesenteroides subsp. mesenteroides (strain ATCC 8293 / DSM 20343 / BCRC 11652 / CCM 1803 / JCM 6124 / NCDO 523 / NBRC 100496 / NCIMB 8023 / NCTC 12954 / NRRL B-1118 / 37Y), this protein is Energy-coupling factor transporter ATP-binding protein EcfA1.